The sequence spans 118 residues: Large ribosomal subunit protein bL20 (118 aa).

Belongs to the bacterial ribosomal protein bL20 family.

Functionally, binds directly to 23S ribosomal RNA and is necessary for the in vitro assembly process of the 50S ribosomal subunit. It is not involved in the protein synthesizing functions of that subunit. This is Large ribosomal subunit protein bL20 from Thermotoga petrophila (strain ATCC BAA-488 / DSM 13995 / JCM 10881 / RKU-1).